Here is a 207-residue protein sequence, read N- to C-terminus: Ribonuclease HII (207 aa).

An RNase H type-2 domain is found at 18 to 207; the sequence is TYLSGSDEAG…PIKKISKETS (190 aa). Residues Asp24, Glu25, and Asp116 each contribute to the a divalent metal cation site.

It belongs to the RNase HII family. Requires Mn(2+) as cofactor. Mg(2+) is required as a cofactor.

It localises to the cytoplasm. The catalysed reaction is Endonucleolytic cleavage to 5'-phosphomonoester.. Functionally, endonuclease that specifically degrades the RNA of RNA-DNA hybrids. The protein is Ribonuclease HII of Mycoplasma capricolum subsp. capricolum (strain California kid / ATCC 27343 / NCTC 10154).